Consider the following 442-residue polypeptide: C4-dicarboxylate transport protein 4 (442 aa).

Transmembrane regions (helical) follow at residues 20–40, 53–73, 90–110, 160–180, 209–229, and 233–253; these read ILYV…YFYP, FIAL…VHGI, LIYF…VGEV, GDLL…AFLG, PVGA…GSLL, and ALIG…LGAI.

It belongs to the dicarboxylate/amino acid:cation symporter (DAACS) (TC 2.A.23) family.

It is found in the cell inner membrane. Functionally, responsible for the transport of dicarboxylates such as succinate, fumarate, and malate from the periplasm across the membrane. This chain is C4-dicarboxylate transport protein 4, found in Bradyrhizobium diazoefficiens (strain JCM 10833 / BCRC 13528 / IAM 13628 / NBRC 14792 / USDA 110).